A 255-amino-acid chain; its full sequence is tRNA (guanine-N(7)-)-methyltransferase (255 aa).

The tract at residues 1–31 (MMHDDPNEAGLPPHNDAIPDETAEGADEVNP) is disordered. Residues 18–27 (IPDETAEGAD) show a composition bias toward acidic residues. Glu-86, Glu-111, Asp-138, and Asp-161 together coordinate S-adenosyl-L-methionine. Asp-161 is an active-site residue. Residues Lys-165, Asp-197, and 232 to 235 (TKFE) each bind substrate.

The protein belongs to the class I-like SAM-binding methyltransferase superfamily. TrmB family.

The catalysed reaction is guanosine(46) in tRNA + S-adenosyl-L-methionine = N(7)-methylguanosine(46) in tRNA + S-adenosyl-L-homocysteine. Its pathway is tRNA modification; N(7)-methylguanine-tRNA biosynthesis. Catalyzes the formation of N(7)-methylguanine at position 46 (m7G46) in tRNA. The sequence is that of tRNA (guanine-N(7)-)-methyltransferase from Burkholderia cenocepacia (strain HI2424).